A 644-amino-acid chain; its full sequence is ATP-dependent zinc metalloprotease FtsH (644 aa).

At 1-4 (MAKN) the chain is on the cytoplasmic side. The chain crosses the membrane as a helical span at residues 5–25 (LILWLVIAVVLMSVFQSFGPS). Over 26 to 98 (ESNGRKVDYS…VGEPPEEPSL (73 aa)) the chain is Periplasmic. A helical transmembrane segment spans residues 99 to 119 (LASIFISWFPMLLLIGVWIFF). At 120–644 (MRQMQGGGGK…NTMSEQLGDK (525 aa)) the chain is on the cytoplasmic side. Position 192-199 (192-199 (GPPGTGKT)) interacts with ATP. H414 contributes to the Zn(2+) binding site. The active site involves E415. Residues H418 and D492 each contribute to the Zn(2+) site. A disordered region spans residues 598–644 (VRPPAGWEEPGASNNSGDNGSPKAPRPVDEPRTPNPGNTMSEQLGDK). Positions 632 to 644 (NPGNTMSEQLGDK) are enriched in polar residues.

It in the central section; belongs to the AAA ATPase family. The protein in the C-terminal section; belongs to the peptidase M41 family. Homohexamer. Zn(2+) serves as cofactor.

It localises to the cell inner membrane. Functionally, acts as a processive, ATP-dependent zinc metallopeptidase for both cytoplasmic and membrane proteins. Plays a role in the quality control of integral membrane proteins. This Shigella flexneri protein is ATP-dependent zinc metalloprotease FtsH.